The sequence spans 355 residues: Lipopolysaccharide heptosyltransferase 1 (355 aa).

ADP-L-glycero-beta-D-manno-heptose-binding residues include Thr186, Thr187, Lys191, Glu221, Asp260, Thr261, Gly262, and His265.

It belongs to the glycosyltransferase 9 family.

The protein resides in the cell inner membrane. It catalyses the reaction an alpha-Kdo-(2-&gt;4)-alpha-Kdo-(2-&gt;6)-lipid A + ADP-L-glycero-beta-D-manno-heptose = an L-alpha-D-Hep-(1-&gt;5)-[alpha-Kdo-(2-&gt;4)]-alpha-Kdo-(2-&gt;6)-lipid A + ADP + H(+). It functions in the pathway bacterial outer membrane biogenesis; LPS core biosynthesis. Its function is as follows. Glycosyltransferase involved in the biosynthesis of the core oligosaccharide region of lipopolysaccharide (LPS). Catalyzes the addition of the first heptose unit to one 3-deoxy-D-manno-octulosonic acid (Kdo) residue of the Kdo2-lipid A module. The protein is Lipopolysaccharide heptosyltransferase 1 of Pseudomonas aeruginosa (strain ATCC 15692 / DSM 22644 / CIP 104116 / JCM 14847 / LMG 12228 / 1C / PRS 101 / PAO1).